A 401-amino-acid polypeptide reads, in one-letter code: MAKRSLASLNAGDLSGKRVLVRVDFNVPLNDTGAITDDTRIRAALPTINDLIGKGAKVILSAHFGRPKGQVNDAMRLTPVAARLSELLGKPVAKTDSCIGPDAEAKVGAMANGDVVLLENVRFFAEEEKNEAGFAEKLAGLAEVYVNDAFGAAHRAHASTEGVTKFLKPSVAGFLMEKELQYLQGAVDEPKRPLAAIVGGSKVSSKIGVLDTLIDKCDKVLIGGGMIFTFYKARGLSVGKSLVEEDKLELAKELEAKAKANGVQLLLPTDVVLADNFAPDANSQTADINAIPDGWMGLDIGPDSIKVFQEALADCQTVIWNGPMGVFEFDKFATGTNSIATTLADLSGKGCCTIIGGGDSVAAVEKAGLAEKMSHISTGGGASLELLEGKVLPGVAALDAA.

Residues 24 to 26, arginine 40, 63 to 66, arginine 122, and arginine 155 contribute to the substrate site; these read DFN and HFGR. ATP-binding positions include lysine 206, glycine 297, glutamate 328, and 357–360; that span reads GGDS.

Belongs to the phosphoglycerate kinase family. Monomer.

Its subcellular location is the cytoplasm. The enzyme catalyses (2R)-3-phosphoglycerate + ATP = (2R)-3-phospho-glyceroyl phosphate + ADP. It functions in the pathway carbohydrate degradation; glycolysis; pyruvate from D-glyceraldehyde 3-phosphate: step 2/5. The protein is Phosphoglycerate kinase of Synechococcus sp. (strain CC9605).